A 441-amino-acid chain; its full sequence is ATP-dependent RNA helicase sub2 (441 aa).

The span at 23–32 (TTAAPAANGD) shows a compositional bias: low complexity. A disordered region spans residues 23-42 (TTAAPAANGDAAKKGDLTVS). Residues 58–86 (TGFRDFLLKGELLRAITDCGFEHPSEVQQ) carry the Q motif motif. Residues 89-264 (IPTAILNVDV…KKFMRNPLEV (176 aa)) form the Helicase ATP-binding domain. An ATP-binding site is contributed by 102-109 (AKSGLGKT). Positions 211–214 (DECD) match the DECD box motif. In terms of domain architecture, Helicase C-terminal spans 292–437 (KLNELLDSLE…EYPEGGVDSS (146 aa)).

This sequence belongs to the DEAD box helicase family. DECD subfamily.

Its subcellular location is the nucleus. It catalyses the reaction ATP + H2O = ADP + phosphate + H(+). In terms of biological role, ATP-binding RNA helicase involved in transcription elongation and required for the export of mRNA out of the nucleus. SUB2 also plays a role in pre-mRNA splicing and spliceosome assembly. May be involved in rDNA and telomeric silencing, and maintenance of genome integrity. The chain is ATP-dependent RNA helicase sub2 (sub2) from Aspergillus oryzae (strain ATCC 42149 / RIB 40) (Yellow koji mold).